Consider the following 367-residue polypeptide: Pectate lyase 1 (367 aa).

The N-terminal stretch at Met1–Ser21 is a signal peptide. Cystine bridges form between Cys28–Cys45 and Cys128–Cys147. Asn148 carries an N-linked (GlcNAc...) asparagine glycan. Residue Asp170 participates in Ca(2+) binding. Residue Asn178 is glycosylated (N-linked (GlcNAc...) asparagine). Ca(2+)-binding residues include Asp194 and Asp198. Arg250 is a catalytic residue. Asn293 carries N-linked (GlcNAc...) asparagine glycosylation. Cys306 and Cys312 are joined by a disulfide.

This sequence belongs to the polysaccharide lyase 1 family. Amb a subfamily. Ca(2+) serves as cofactor.

It catalyses the reaction Eliminative cleavage of (1-&gt;4)-alpha-D-galacturonan to give oligosaccharides with 4-deoxy-alpha-D-galact-4-enuronosyl groups at their non-reducing ends.. It functions in the pathway glycan metabolism; pectin degradation; 2-dehydro-3-deoxy-D-gluconate from pectin: step 2/5. Its function is as follows. Has pectate lyase activity. This Hesperocyparis arizonica (Arizona cypress) protein is Pectate lyase 1.